The following is a 430-amino-acid chain: Cell division protein FtsZ (430 aa).

GTP is bound by residues 76-80 (GGGCN), 163-165 (GTG), E194, R198, and D242. The tract at residues 374-418 (KEKPQAKTSSKPVLSGPPAGVETVPSTTTPEDPLGEIPMAPELDI) is disordered.

The protein belongs to the FtsZ family. As to quaternary structure, homodimer. Polymerizes to form a dynamic ring structure in a strictly GTP-dependent manner. Interacts directly with several other division proteins.

The protein localises to the cytoplasm. Its function is as follows. Essential cell division protein that forms a contractile ring structure (Z ring) at the future cell division site. The regulation of the ring assembly controls the timing and the location of cell division. One of the functions of the FtsZ ring is to recruit other cell division proteins to the septum to produce a new cell wall between the dividing cells. Binds GTP and shows GTPase activity. This is Cell division protein FtsZ from Synechocystis sp. (strain ATCC 27184 / PCC 6803 / Kazusa).